The chain runs to 551 residues: Cytochrome c lysine N-methyltransferase 1 (551 aa).

Residues Asp-46 to Lys-273 form the SET domain. The segment at Ile-184–Asp-288 is SET-like.

This sequence belongs to the class V-like SAM-binding methyltransferase superfamily.

It is found in the cytoplasm. The protein localises to the cytosol. The enzyme catalyses L-lysyl-[cytochrome c] + S-adenosyl-L-methionine = N(6)-methyl-L-lysyl-[cytochrome c] + S-adenosyl-L-homocysteine + H(+). In terms of biological role, methyltransferase which mediates trimethylation of cytochrome c (CYC1). The sequence is that of Cytochrome c lysine N-methyltransferase 1 (CTM1) from Candida glabrata (strain ATCC 2001 / BCRC 20586 / JCM 3761 / NBRC 0622 / NRRL Y-65 / CBS 138) (Yeast).